A 581-amino-acid polypeptide reads, in one-letter code: Arginine--tRNA ligase (581 aa).

Positions 126–136 (PNLAKEMHVGH) match the 'HIGH' region motif.

This sequence belongs to the class-I aminoacyl-tRNA synthetase family. In terms of assembly, monomer.

It localises to the cytoplasm. The enzyme catalyses tRNA(Arg) + L-arginine + ATP = L-arginyl-tRNA(Arg) + AMP + diphosphate. In Shewanella sp. (strain MR-4), this protein is Arginine--tRNA ligase.